Here is a 119-residue protein sequence, read N- to C-terminus: Non-specific lipid-transfer protein 11 (119 aa).

A signal peptide spans 1 to 28 (MRNITTTTRKMLLLVITILLGIAYHGEA). 4 cysteine pairs are disulfide-bonded: cysteine 31/cysteine 78, cysteine 41/cysteine 55, cysteine 56/cysteine 101, and cysteine 76/cysteine 115.

This sequence belongs to the plant LTP family.

In terms of biological role, plant non-specific lipid-transfer proteins transfer phospholipids as well as galactolipids across membranes. May play a role in wax or cutin deposition in the cell walls of expanding epidermal cells and certain secretory tissues. This Arabidopsis thaliana (Mouse-ear cress) protein is Non-specific lipid-transfer protein 11 (LTP11).